Here is a 493-residue protein sequence, read N- to C-terminus: Glycerol kinase (493 aa).

Residue Thr-11 coordinates ADP. The ATP site is built by Thr-11, Thr-12, and Ser-13. A sn-glycerol 3-phosphate-binding site is contributed by Thr-11. Arg-15 is an ADP binding site. Residues Arg-80, Glu-81, Tyr-132, and Asp-241 each coordinate sn-glycerol 3-phosphate. Glycerol is bound by residues Arg-80, Glu-81, Tyr-132, Asp-241, and Gln-242. ADP-binding residues include Thr-263 and Gly-306. ATP-binding residues include Thr-263, Gly-306, Gln-310, and Gly-408. Gly-408 contributes to the ADP binding site.

It belongs to the FGGY kinase family.

The enzyme catalyses glycerol + ATP = sn-glycerol 3-phosphate + ADP + H(+). It participates in polyol metabolism; glycerol degradation via glycerol kinase pathway; sn-glycerol 3-phosphate from glycerol: step 1/1. With respect to regulation, inhibited by fructose 1,6-bisphosphate (FBP). Key enzyme in the regulation of glycerol uptake and metabolism. Catalyzes the phosphorylation of glycerol to yield sn-glycerol 3-phosphate. The protein is Glycerol kinase of Cereibacter sphaeroides (strain ATCC 17029 / ATH 2.4.9) (Rhodobacter sphaeroides).